The chain runs to 489 residues: uncharacterized protein (489 aa).

The next 12 membrane-spanning stretches (helical) occupy residues 14–34 (LLFV…ISLF), 36–56 (LGPF…IVTL), 100–120 (IIGP…FSGI), 127–147 (LVNT…LAFI), 158–178 (LIAL…IVAI), 203–223 (EISF…YAGV), 241–261 (ILIV…IILN), 286–306 (AAGL…NVST), 344–364 (IWFT…IPLV), 380–400 (VGSA…FKFI), 419–439 (LFCL…FPVI), and 449–469 (HTLT…LFLL).

The protein to M.genitalium MG226.

Its subcellular location is the cell membrane. This is an uncharacterized protein from Mycoplasma genitalium (strain ATCC 33530 / DSM 19775 / NCTC 10195 / G37) (Mycoplasmoides genitalium).